A 734-amino-acid polypeptide reads, in one-letter code: Oligopeptide transporter 2 (734 aa).

The next 14 helical transmembrane spans lie at 44 to 64 (MWFLGLLSCILLSFLNTFFGY), 68 to 88 (PLMITMISVQVVTLPLGKLMA), 125 to 145 (GAGFGSGTAYAVGIVDIIMAF), 152 to 172 (FLASWILVITTQILGYGWAGI), 211 to 231 (FFVIAFVCSFAWYIFPAYLFL), 252 to 272 (LGSGMSGLGIGAFALDWSVIA), 283 to 303 (FFAIVNVLVGYVLVMYMVIPI), 359 to 379 (FFAISYGIGFAAIVSTLTHVA), 414 to 434 (WWFYSLLAISLVLSLVLCIFM), 442 to 462 (WWGLLLASFMALTFTVPVSII), 525 to 545 (MFLVQFIGTVIAGTVNISVAW), 596 to 616 (YPALNWFFLGGLIGPVLVWLL), 644 to 664 (ATSVNFNCWIIVGVIFNYFVF), and 677 to 697 (VLSAALDAGLAFMGVLLYFSL).

It belongs to the oligopeptide OPT transporter (TC 2.A.67.1) family. Expressed in flowers, leaves, roots, and stems.

It is found in the membrane. Functionally, involved in the translocation of tetra- and pentapeptides across the cellular membrane in an energy-dependent manner. This Arabidopsis thaliana (Mouse-ear cress) protein is Oligopeptide transporter 2 (OPT2).